A 162-amino-acid polypeptide reads, in one-letter code: FCS-Like Zinc finger 6 (162 aa).

Disordered regions lie at residues 25 to 47 (NLPS…YGSN) and 121 to 162 (RQEQ…AAAV). The segment covering 27-47 (PSESEPSNQQKPTVASPYGSN) has biased composition (polar residues). The FLZ-type zinc-finger motif lies at 88–132 (HFLRSCALCERLLVPGRDIYMYRGDKAFCSSECRQEQMAQDERKE). A compositionally biased stretch (low complexity) spans 147 to 162 (APARAKPGKGRAAAAV).

It belongs to the FLZ family. As to quaternary structure, interacts with KIN10 and KIN11 via its FLZ-type zinc finger domain. As to expression, early expressed in hypocotyl and cotyledon. Later expressed in old or senescing leaves and in pistil, pollen and filament of open flowers.

It is found in the nucleus. The protein resides in the cytoplasm. The protein localises to the endoplasmic reticulum. Its function is as follows. May act as an adapter to facilitate the interaction of SnRK1 complex with effector proteins, conferring tissue- and stimulus-type specific differences in the SnRK1 regulation pathway. Negatively regulates KIN10 leading to a repression of the SnRK1 signaling pathway. The sequence is that of FCS-Like Zinc finger 6 from Arabidopsis thaliana (Mouse-ear cress).